Consider the following 121-residue polypeptide: MTKEQIIEAIKEMSVLELNELVKACEEEFGVSAAAPVAVVGGAAAGAAAEEKSEFDVVLTNAGANKIKVIKAVRELTGLGLKEAKEIVDGAPKTLKEAVAKEEAEDMKAKLAEVGAEVELK.

It belongs to the bacterial ribosomal protein bL12 family. As to quaternary structure, homodimer. Part of the ribosomal stalk of the 50S ribosomal subunit. Forms a multimeric L10(L12)X complex, where L10 forms an elongated spine to which 2 to 4 L12 dimers bind in a sequential fashion. Binds GTP-bound translation factors.

Functionally, forms part of the ribosomal stalk which helps the ribosome interact with GTP-bound translation factors. Is thus essential for accurate translation. This is Large ribosomal subunit protein bL12 from Clostridium perfringens (strain ATCC 13124 / DSM 756 / JCM 1290 / NCIMB 6125 / NCTC 8237 / Type A).